The chain runs to 210 residues: Orotate phosphoribosyltransferase (210 aa).

5-phospho-alpha-D-ribose 1-diphosphate is bound by residues Arg-94, Lys-98, His-100, and 120-128 (EDLISTGGS). Ser-124 contributes to the orotate binding site.

Belongs to the purine/pyrimidine phosphoribosyltransferase family. PyrE subfamily. As to quaternary structure, homodimer. The cofactor is Mg(2+).

The enzyme catalyses orotidine 5'-phosphate + diphosphate = orotate + 5-phospho-alpha-D-ribose 1-diphosphate. Its pathway is pyrimidine metabolism; UMP biosynthesis via de novo pathway; UMP from orotate: step 1/2. Its function is as follows. Catalyzes the transfer of a ribosyl phosphate group from 5-phosphoribose 1-diphosphate to orotate, leading to the formation of orotidine monophosphate (OMP). The polypeptide is Orotate phosphoribosyltransferase (Bacillus cereus (strain ATCC 14579 / DSM 31 / CCUG 7414 / JCM 2152 / NBRC 15305 / NCIMB 9373 / NCTC 2599 / NRRL B-3711)).